We begin with the raw amino-acid sequence, 282 residues long: Putative hydrolase BamMC406_5393 (282 aa).

Residues E124, E126, and D155 each contribute to the Mg(2+) site.

This sequence belongs to the FAH family. The cofactor is Mg(2+).

The chain is Putative hydrolase BamMC406_5393 from Burkholderia ambifaria (strain MC40-6).